We begin with the raw amino-acid sequence, 203 residues long: UPF0637 protein SSP1683 (203 aa).

It belongs to the UPF0637 family.

The polypeptide is UPF0637 protein SSP1683 (Staphylococcus saprophyticus subsp. saprophyticus (strain ATCC 15305 / DSM 20229 / NCIMB 8711 / NCTC 7292 / S-41)).